The primary structure comprises 363 residues: Cytochrome P450 CYP82D47 (363 aa).

Residue Cys-342 participates in heme binding.

This sequence belongs to the cytochrome P450 family. The cofactor is heme.

Probable heme-thiolate monooxygenase. This is Cytochrome P450 CYP82D47 from Panax ginseng (Korean ginseng).